We begin with the raw amino-acid sequence, 185 residues long: Peptide deformylase (185 aa).

Residues cysteine 112 and histidine 155 each coordinate Fe cation. Residue glutamate 156 is part of the active site. Histidine 159 provides a ligand contact to Fe cation.

Belongs to the polypeptide deformylase family. It depends on Fe(2+) as a cofactor.

It catalyses the reaction N-terminal N-formyl-L-methionyl-[peptide] + H2O = N-terminal L-methionyl-[peptide] + formate. In terms of biological role, removes the formyl group from the N-terminal Met of newly synthesized proteins. Requires at least a dipeptide for an efficient rate of reaction. N-terminal L-methionine is a prerequisite for activity but the enzyme has broad specificity at other positions. This is Peptide deformylase from Latilactobacillus sakei subsp. sakei (strain 23K) (Lactobacillus sakei subsp. sakei).